The primary structure comprises 550 residues: CTP synthase (550 aa).

Residues 1-272 form an amidoligase domain region; it reads MKTKFIFITG…DQKITSFLNL (272 aa). Serine 14 is a CTP binding site. Serine 14 is a UTP binding site. 15–20 contacts ATP; the sequence is SLGKGL. Tyrosine 55 serves as a coordination point for L-glutamine. Aspartate 72 is a binding site for ATP. Mg(2+) contacts are provided by aspartate 72 and glutamate 146. Residues 153–155, 193–198, and lysine 229 contribute to the CTP site; these read DIE and KTKPTQ. Residues 193–198 and lysine 229 each bind UTP; that span reads KTKPTQ. One can recognise a Glutamine amidotransferase type-1 domain in the interval 297-550; the sequence is TITIVGKYVG…IHAACNHNKQ (254 aa). Glycine 359 provides a ligand contact to L-glutamine. The active-site Nucleophile; for glutamine hydrolysis is cysteine 386. L-glutamine is bound by residues 387–390, glutamate 410, and arginine 478; that span reads LGMQ. Catalysis depends on residues histidine 523 and glutamate 525.

The protein belongs to the CTP synthase family. As to quaternary structure, homotetramer.

The catalysed reaction is UTP + L-glutamine + ATP + H2O = CTP + L-glutamate + ADP + phosphate + 2 H(+). It carries out the reaction L-glutamine + H2O = L-glutamate + NH4(+). It catalyses the reaction UTP + NH4(+) + ATP = CTP + ADP + phosphate + 2 H(+). The protein operates within pyrimidine metabolism; CTP biosynthesis via de novo pathway; CTP from UDP: step 2/2. Allosterically activated by GTP, when glutamine is the substrate; GTP has no effect on the reaction when ammonia is the substrate. The allosteric effector GTP functions by stabilizing the protein conformation that binds the tetrahedral intermediate(s) formed during glutamine hydrolysis. Inhibited by the product CTP, via allosteric rather than competitive inhibition. Functionally, catalyzes the ATP-dependent amination of UTP to CTP with either L-glutamine or ammonia as the source of nitrogen. Regulates intracellular CTP levels through interactions with the four ribonucleotide triphosphates. This chain is CTP synthase, found in Lawsonia intracellularis (strain PHE/MN1-00).